We begin with the raw amino-acid sequence, 315 residues long: Glutamyl-Q tRNA(Asp) synthetase (315 aa).

L-glutamate is bound by residues 23–27 (RFAPS) and Glu59. Positions 26 to 36 (PSPTGPLHIGS) match the 'HIGH' region motif. Residues Cys115, Cys117, Tyr142, and Cys146 each coordinate Zn(2+). Tyr202 and Arg220 together coordinate L-glutamate. The 'KMSKS' region signature appears at 258–262 (KLSKQ). Lys261 contacts ATP.

It belongs to the class-I aminoacyl-tRNA synthetase family. GluQ subfamily. It depends on Zn(2+) as a cofactor.

In terms of biological role, catalyzes the tRNA-independent activation of glutamate in presence of ATP and the subsequent transfer of glutamate onto a tRNA(Asp). Glutamate is transferred on the 2-amino-5-(4,5-dihydroxy-2-cyclopenten-1-yl) moiety of the queuosine in the wobble position of the QUC anticodon. This Ralstonia nicotianae (strain ATCC BAA-1114 / GMI1000) (Ralstonia solanacearum) protein is Glutamyl-Q tRNA(Asp) synthetase.